The sequence spans 274 residues: NH(3)-dependent NAD(+) synthetase (274 aa).

46–53 lines the ATP pocket; that stretch reads GISGGQDS. D52 lines the Mg(2+) pocket. R140 is a binding site for deamido-NAD(+). T160 provides a ligand contact to ATP. E165 provides a ligand contact to Mg(2+). Positions 173 and 180 each coordinate deamido-NAD(+). Residues K189 and T211 each contribute to the ATP site. 260 to 261 contacts deamido-NAD(+); it reads HK.

Belongs to the NAD synthetase family. In terms of assembly, homodimer.

The enzyme catalyses deamido-NAD(+) + NH4(+) + ATP = AMP + diphosphate + NAD(+) + H(+). It participates in cofactor biosynthesis; NAD(+) biosynthesis; NAD(+) from deamido-NAD(+) (ammonia route): step 1/1. Catalyzes the ATP-dependent amidation of deamido-NAD to form NAD. Uses ammonia as a nitrogen source. The chain is NH(3)-dependent NAD(+) synthetase from Streptococcus equi subsp. zooepidemicus (strain MGCS10565).